The chain runs to 478 residues: Ribosomal RNA small subunit methyltransferase F (478 aa).

S-adenosyl-L-methionine contacts are provided by residues 126 to 132 (AAAPGSK), Glu150, Asp177, and Asp195. The active-site Nucleophile is the Cys248.

This sequence belongs to the class I-like SAM-binding methyltransferase superfamily. RsmB/NOP family.

It is found in the cytoplasm. It carries out the reaction cytidine(1407) in 16S rRNA + S-adenosyl-L-methionine = 5-methylcytidine(1407) in 16S rRNA + S-adenosyl-L-homocysteine + H(+). In terms of biological role, specifically methylates the cytosine at position 1407 (m5C1407) of 16S rRNA. The chain is Ribosomal RNA small subunit methyltransferase F from Erwinia tasmaniensis (strain DSM 17950 / CFBP 7177 / CIP 109463 / NCPPB 4357 / Et1/99).